Reading from the N-terminus, the 148-residue chain is Ribonuclease H (148 aa).

Residues 1-141 (MKTVEIYTDG…ADELANLGVK (141 aa)) enclose the RNase H type-1 domain. Mg(2+) is bound by residues aspartate 9, glutamate 47, aspartate 69, and aspartate 133.

This sequence belongs to the RNase H family. In terms of assembly, monomer. Mg(2+) serves as cofactor.

It localises to the cytoplasm. The enzyme catalyses Endonucleolytic cleavage to 5'-phosphomonoester.. In terms of biological role, endonuclease that specifically degrades the RNA of RNA-DNA hybrids. In Hahella chejuensis (strain KCTC 2396), this protein is Ribonuclease H.